A 617-amino-acid polypeptide reads, in one-letter code: Secretogranin-2 (617 aa).

A signal peptide spans M1–F30. At Y153 the chain carries Sulfotyrosine. Phosphoserine is present on residues S176 and S270. Composition is skewed to basic and acidic residues over residues T261–R286 and E295–E307. The interval T261 to E307 is disordered. A phosphoserine mark is found at S434, S532, S555, and S556.

It belongs to the chromogranin/secretogranin protein family. As to quaternary structure, interacts with Secretogranin III/SCG3.

The protein resides in the secreted. Its function is as follows. Neuroendocrine protein of the granin family that regulates the biogenesis of secretory granules. The sequence is that of Secretogranin-2 (Scg2) from Mus musculus (Mouse).